The following is a 161-amino-acid chain: Ragulator complex protein LAMTOR1 (161 aa).

A disordered region spans residues 1 to 43; the sequence is MGCCYSSENEDSDQDREERKLLLDPSSPPTKALNGAEPNYHSL. Gly-2 carries the N-myristoyl glycine lipid modification. Residues Cys-3 and Cys-4 are each lipidated (S-palmitoyl cysteine). Lys-20 participates in a covalent cross-link: Glycyl lysine isopeptide (Lys-Gly) (interchain with G-Cter in ubiquitin). Ser-27 carries the phosphoserine modification. Lys-31 is covalently cross-linked (Glycyl lysine isopeptide (Lys-Gly) (interchain with G-Cter in ubiquitin)). Ser-42 and Ser-56 each carry phosphoserine. Lys-60 is covalently cross-linked (Glycyl lysine isopeptide (Lys-Gly) (interchain with G-Cter in ubiquitin)). Ser-98 is modified (phosphoserine). Residues Lys-103 and Lys-104 each participate in a glycyl lysine isopeptide (Lys-Gly) (interchain with G-Cter in ubiquitin) cross-link. Positions 121-161 are interaction with LAMTOR2 and LAMTOR3; the sequence is SEPIPFSDLQQVSRIAAYAYSALSQIRVDAKEELVVQFGIP. Ser-141 carries the phosphoserine modification.

Belongs to the LAMTOR1 family. Part of the Ragulator complex composed of LAMTOR1, LAMTOR2, LAMTOR3, LAMTOR4 and LAMTOR5. LAMTOR4 and LAMTOR5 form a heterodimer that interacts, through LAMTOR1, with a LAMTOR2, LAMTOR3 heterodimer. Interacts with LAMTOR2 and LAMTOR3; the interaction is direct. The Ragulator complex interacts with both the mTORC1 complex and heterodimers constituted of the Rag GTPases RagA/RRAGA, RagB/RRAGB, RagC/RRAGC and RagD/RRAGD; regulated by amino acid availability. The Ragulator complex interacts with SLC38A9; the probable amino acid sensor. Component of the lysosomal folliculin complex (LFC), composed of FLCN, FNIP1 (or FNIP2), RagA/RRAGA or RagB/RRAGB GDP-bound, RagC/RRAGC or RagD/RRAGD GTP-bound, and Ragulator. Associates with the lysosomal V-ATPase complex; interaction promotes the guanine nucleotide exchange factor (GEF) of the Ragulator complex. Interacts with MMP14. Interacts with CDKN1B; prevents the interaction of CDKN1B with RHOA leaving RHOA in a form accessible to activation by ARHGEF2. Interacts with PIP4P1. In terms of processing, N-terminal myristoylation and palmitoylation mediates its recruitment to lysosome membranes, thereby promoting localization of the Ragulator complex to lysosomes. N-myristoylation by NMT1 is required for palmitoylation at Cys-3 and Cys-4. May be palmitoylated by ZDHHC3. Ubiquitinated at Lys-60, Lys-103 and Lys-104 by UBE3A, promoting its degradation by the proteasome. Ubiquitination at Lys-20 impairs the association with the lysosomal V-ATPase complex. Deubiquitination at Lys-20 by USP32 promotes the association with the lysosomal V-ATPase complex and subsequent activation of the mTORC1 complex.

The protein localises to the lysosome membrane. Its subcellular location is the late endosome membrane. Its function is as follows. Key component of the Ragulator complex, a multiprotein complex involved in amino acid sensing and activation of mTORC1, a signaling complex promoting cell growth in response to growth factors, energy levels, and amino acids. Activated by amino acids through a mechanism involving the lysosomal V-ATPase, the Ragulator plays a dual role for the small GTPases Rag (RagA/RRAGA, RagB/RRAGB, RagC/RRAGC and/or RagD/RRAGD): it (1) acts as a guanine nucleotide exchange factor (GEF), activating the small GTPases Rag and (2) mediates recruitment of Rag GTPases to the lysosome membrane. Activated Ragulator and Rag GTPases function as a scaffold recruiting mTORC1 to lysosomes where it is in turn activated. LAMTOR1 is directly responsible for anchoring the Ragulator complex to the lysosomal membrane. LAMTOR1 wraps around the other subunits of the Ragulator complex to hold them in place and interacts with the Rag GTPases, thereby playing a key role in the recruitment of the mTORC1 complex to lysosomes. Also involved in the control of embryonic stem cells differentiation via non-canonical RagC/RRAGC and RagD/RRAGD activation: together with FLCN, it is necessary to recruit and activate RagC/RRAGC and RagD/RRAGD at the lysosomes, and to induce exit of embryonic stem cells from pluripotency via non-canonical, mTOR-independent TFE3 inactivation. Also required for late endosomes/lysosomes biogenesis it may regulate both the recycling of receptors through endosomes and the MAPK signaling pathway through recruitment of some of its components to late endosomes. May be involved in cholesterol homeostasis regulating LDL uptake and cholesterol release from late endosomes/lysosomes. May also play a role in RHOA activation. The sequence is that of Ragulator complex protein LAMTOR1 from Homo sapiens (Human).